A 439-amino-acid polypeptide reads, in one-letter code: Elongation factor 1-alpha 2 (439 aa).

A tr-type G domain is found at 6-229; the sequence is KDHLNLVVIG…DEFKVPKRPI (224 aa). The G1 stretch occupies residues 15 to 22; sequence GHVDSGKS. Residue 15–22 participates in GTP binding; that stretch reads GHVDSGKS. Residues 71-75 form a G2 region; sequence GITIN. The interval 92 to 95 is G3; that stretch reads DAPG. GTP is bound by residues 92 to 96 and 154 to 157; these read DAPGH and NKMD. Residues 154 to 157 form a G4 region; it reads NKMD. The segment at 193–195 is G5; it reads SGF.

Belongs to the TRAFAC class translation factor GTPase superfamily. Classic translation factor GTPase family. EF-Tu/EF-1A subfamily.

It localises to the cytoplasm. In terms of biological role, this protein promotes the GTP-dependent binding of aminoacyl-tRNA to the A-site of ribosomes during protein biosynthesis. This chain is Elongation factor 1-alpha 2 (EFA2), found in Euplotes crassus.